Reading from the N-terminus, the 211-residue chain is tRNA (guanine-N(7)-)-methyltransferase (211 aa).

4 residues coordinate S-adenosyl-L-methionine: Glu44, Asp69, Asp96, and Asp118. Residue Asp118 is part of the active site. Lys122 serves as a coordination point for substrate. The tract at residues 124 to 129 (KHEKRR) is interaction with RNA. Substrate-binding positions include Asp154 and 191–194 (TEYE).

It belongs to the class I-like SAM-binding methyltransferase superfamily. TrmB family.

The enzyme catalyses guanosine(46) in tRNA + S-adenosyl-L-methionine = N(7)-methylguanosine(46) in tRNA + S-adenosyl-L-homocysteine. The protein operates within tRNA modification; N(7)-methylguanine-tRNA biosynthesis. Its function is as follows. Catalyzes the formation of N(7)-methylguanine at position 46 (m7G46) in tRNA. This is tRNA (guanine-N(7)-)-methyltransferase from Streptococcus pyogenes serotype M18 (strain MGAS8232).